The primary structure comprises 406 residues: Renin (406 aa).

The first 23 residues, 1–23 (MDGWRRMPRWGLLLLLWGSCTFG), serve as a signal peptide directing secretion. Residues 24 to 66 (LPTDTTTFKRIFLKRMPSIRESLKERGVDMARLGPEWSQPMKR) constitute a propeptide, activation peptide. The N-linked (GlcNAc...) asparagine glycan is linked to Asn71. The 318-residue stretch at 86–403 (YYGEIGIGTP…DRRNNRIGFA (318 aa)) folds into the Peptidase A1 domain. Residue Asp104 is part of the active site. Cys117 and Cys124 are joined by a disulfide. Residue Asn141 is glycosylated (N-linked (GlcNAc...) asparagine). Cys283 and Cys287 are oxidised to a cystine. Asp292 is a catalytic residue. Cys325 and Cys362 are oxidised to a cystine.

This sequence belongs to the peptidase A1 family. Interacts with ATP6AP2.

The protein resides in the secreted. Its subcellular location is the membrane. The enzyme catalyses Cleavage of Leu-|-Xaa bond in angiotensinogen to generate angiotensin I.. Its activity is regulated as follows. Interaction with ATP6AP2 results in a 5-fold increased efficiency in angiotensinogen processing. Its function is as follows. Renin is a highly specific endopeptidase, whose only known function is to generate angiotensin I from angiotensinogen in the plasma, initiating a cascade of reactions that produce an elevation of blood pressure and increased sodium retention by the kidney. This chain is Renin (REN), found in Macaca fascicularis (Crab-eating macaque).